Consider the following 135-residue polypeptide: Large ribosomal subunit protein mL61 (135 aa).

Residues 114–129 (HHESSPENIKEAHKQD) show a composition bias toward basic and acidic residues. A disordered region spans residues 114–135 (HHESSPENIKEAHKQDYSPPSN).

The protein belongs to the mitochondrion-specific ribosomal protein mL61 family. In terms of assembly, component of the mitochondrial large ribosomal subunit (mt-LSU). Mature yeast 74S mitochondrial ribosomes consist of a small (37S) and a large (54S) subunit. The 37S small subunit contains a 15S ribosomal RNA (15S mt-rRNA) and at least 32 different proteins. The 54S large subunit contains a 21S rRNA (21S mt-rRNA) and at least 45 different proteins.

The protein localises to the mitochondrion. Functionally, component of the mitochondrial ribosome (mitoribosome), a dedicated translation machinery responsible for the synthesis of mitochondrial genome-encoded proteins, including at least some of the essential transmembrane subunits of the mitochondrial respiratory chain. The mitoribosomes are attached to the mitochondrial inner membrane and translation products are cotranslationally integrated into the membrane. mL61 is not essential in cells grown at 30 degrees Celsius but is required for mitochondrial translation in cells grown at 18 degrees Celsius. In Schizosaccharomyces pombe (strain 972 / ATCC 24843) (Fission yeast), this protein is Large ribosomal subunit protein mL61 (mrp49).